Reading from the N-terminus, the 555-residue chain is Putative protein NRT1/ PTR FAMILY 2.14 (555 aa).

12 helical membrane-spanning segments follow: residues 62 to 82 (VTLI…GAFI), 93 to 113 (IVFG…TSLV), 135 to 155 (YSQL…TGGI), 181 to 201 (FFSW…TLVL), 209 to 229 (WGIG…LLFV), 234 to 254 (YVFV…LVAA), 319 to 339 (IKSI…FLAM), 363 to 383 (LIPP…WLPF), 405 to 425 (LQKV…SGIV), 441 to 461 (VFWL…TIVG), 480 to 500 (SLLY…VSIV), and 523 to 543 (CFYY…FWCA).

Belongs to the major facilitator superfamily. Proton-dependent oligopeptide transporter (POT/PTR) (TC 2.A.17) family. In terms of tissue distribution, not detected.

Its subcellular location is the membrane. The polypeptide is Putative protein NRT1/ PTR FAMILY 2.14 (NPF2.14) (Arabidopsis thaliana (Mouse-ear cress)).